The chain runs to 271 residues: 5'-nucleotidase SurE (271 aa).

A divalent metal cation-binding residues include Asp14, Asp15, Ser46, and Asn104.

This sequence belongs to the SurE nucleotidase family. The cofactor is a divalent metal cation.

It is found in the cytoplasm. The catalysed reaction is a ribonucleoside 5'-phosphate + H2O = a ribonucleoside + phosphate. In terms of biological role, nucleotidase that shows phosphatase activity on nucleoside 5'-monophosphates. This is 5'-nucleotidase SurE from Gloeothece citriformis (strain PCC 7424) (Cyanothece sp. (strain PCC 7424)).